The sequence spans 654 residues: MDLHTAVYNAAHDGKLPLLQKLLAGRGREELEELLGEVAGGGTPLLIAARRGHLDVVEYLVDHCGASVEASGSVHFDGETIEGAPPLWAASAAGHLAVVRSLLRRGASVNRTTRTNSTPLRAACFDGHLDVVRYLVGEHKADLEVANRHGHTCLMISCYKGHREIARYLLERGAQVNRRSAKGNTALHDCAESGSLEILQLLLGCHARMERDGYGMTPLLAASVTGHTNIVEYLIQEQPGHEQLSGTELPGEGSSQVAGNHCSTPEEAEPYESCCPTSREAAVEALELLGATYVDKKRDLLGALKHWRRAMELRHQGGGYLPKPEPQQLVLAYDYSREVTTPQELEALITDPDEMRMQALLIRERILGPSHPDTSYYIRYRGAVYADSGNFERCIRLWKYALDMQQNNLEPLSPMTASSFLSFAELFSYVLQDRSAKGNLGMQLGFADLMGVLSKGVREVERALQLPKEPGDSAQFTKAIAIILHLLYLLEKVECTPSQEHLKHQTVYRLLKCAPRGKNGFTPLHMAVDKETTNVGRYRVGVFPSLQVVKVLLDCGADPDSRDFDNNTPLHIAAQNNCPAIMDALIEAGAHMDATNAFKKTAYELLDSKLLAKSTVQPFNYVTLQCLAARALDRNKVPYKGFIPEELEAFIQLH.

ANK repeat units lie at residues 2-31, 40-70, 82-111, 115-145, 149-178, 182-211, and 214-243; these read DLHTAVYNAAHDGKLPLLQKLLAGRGREEL, GGGTPLLIAARRGHLDVVEYLVDHCGASVEA, EGAPPLWAASAAGHLAVVRSLLRRGASVNR, TNSTPLRAACFDGHLDVVRYLVGEHKADLEV, HGHTCLMISCYKGHREIARYLLERGAQVNR, KGNTALHDCAESGSLEILQLLLGCHARMER, and YGMTPLLAASVTGHTNIVEYLIQEQPGHEQ. A Phosphoserine modification is found at serine 108. The disordered stretch occupies residues 242 to 265; sequence EQLSGTELPGEGSSQVAGNHCSTP. Residues 253–263 show a composition bias toward polar residues; sequence GSSQVAGNHCS. TPR repeat units lie at residues 283–317 and 375–408; these read VEALELLGATYVDKKRDLLGALKHWRRAMELRHQG and SYYIRYRGAVYADSGNFERCIRLWKYALDMQQNN. 2 ANK repeats span residues 519–561 and 565–594; these read NGFT…DPDS and DNNTPLHIAAQNNCPAIMDALIEAGAHMDA. Serine 608 is modified (phosphoserine).

It belongs to the fem-1 family. Component of a CRL2 E3 ubiquitin-protein ligase complex, also named ECS (Elongin BC-CUL2/5-SOCS-box protein) complex, composed of CUL2, Elongin BC (ELOB and ELOC), RBX1 and substrate-specific adapter FEM1A. Interacts with PTGER4. Interacts with NFKB1; the interaction is direct. Post-translationally, phosphorylated; highly phosphorylated in myoblasts and myotubes. Phosphorylation at Ser-108 and Ser-608 promote PGE2-EP4-mediated inhibition of inflammation. Dephosphorylated by protein phosphatase 2A (PP2A). In terms of tissue distribution, preferentially expressed in cardiac muscle, brain and liver (at protein level). Also expressed in skeletal muscle.

It is found in the mitochondrion. The protein localises to the cytoplasm. It functions in the pathway protein modification; protein ubiquitination. Functionally, substrate-recognition component of a Cul2-RING (CRL2) E3 ubiquitin-protein ligase complex of the DesCEND (destruction via C-end degrons) pathway, which recognizes a C-degron located at the extreme C terminus of target proteins, leading to their ubiquitination and degradation. The C-degron recognized by the DesCEND pathway is usually a motif of less than ten residues and can be present in full-length proteins, truncated proteins or proteolytically cleaved forms. The CRL2(FEM1A) complex specifically recognizes proteins with an arginine at the C-terminus: recognizes and binds proteins ending with -Lys/Arg-Xaa-Arg and -Lys/Arg-Xaa-Xaa-Arg C-degrons, such as SIL1 or OR51B2, leading to their ubiquitination and degradation. Involved in PGE2-EP4-mediated inhibition of inflammation of macrophages via interaction with NFKB1 and PTGER4. Promotes inflammation in brain microglia through MAP2K4/MKK4-mediated signaling. The protein is Protein fem-1 homolog A-A of Mus musculus (Mouse).